The primary structure comprises 297 residues: HTH-type transcriptional regulator ArgP (297 aa).

The 57-residue stretch at 4-60 (PDYRTLQALDAVIRERGFERAAQKLCITQSAVSQRIKQLENMFGQPLLVRTVPPRPT) folds into the HTH lysR-type domain. The segment at residues 21-40 (FERAAQKLCITQSAVSQRIK) is a DNA-binding region (H-T-H motif).

The protein belongs to the LysR transcriptional regulatory family. Homodimer.

Functionally, controls the transcription of genes involved in arginine and lysine metabolism. In Klebsiella pneumoniae (strain 342), this protein is HTH-type transcriptional regulator ArgP.